A 277-amino-acid polypeptide reads, in one-letter code: 2-dehydro-3-deoxyphosphooctonate aldolase (277 aa).

The protein belongs to the KdsA family.

Its subcellular location is the cytoplasm. The catalysed reaction is D-arabinose 5-phosphate + phosphoenolpyruvate + H2O = 3-deoxy-alpha-D-manno-2-octulosonate-8-phosphate + phosphate. It participates in carbohydrate biosynthesis; 3-deoxy-D-manno-octulosonate biosynthesis; 3-deoxy-D-manno-octulosonate from D-ribulose 5-phosphate: step 2/3. It functions in the pathway bacterial outer membrane biogenesis; lipopolysaccharide biosynthesis. This Hydrogenovibrio crunogenus (strain DSM 25203 / XCL-2) (Thiomicrospira crunogena) protein is 2-dehydro-3-deoxyphosphooctonate aldolase.